The sequence spans 647 residues: DNA mismatch repair protein MutL (647 aa).

The interval 346–378 (QTVHAPRSAAPRVSERASDEPPAWQPSPTSGEP) is disordered.

It belongs to the DNA mismatch repair MutL/HexB family.

Its function is as follows. This protein is involved in the repair of mismatches in DNA. It is required for dam-dependent methyl-directed DNA mismatch repair. May act as a 'molecular matchmaker', a protein that promotes the formation of a stable complex between two or more DNA-binding proteins in an ATP-dependent manner without itself being part of a final effector complex. The chain is DNA mismatch repair protein MutL from Limosilactobacillus fermentum (strain NBRC 3956 / LMG 18251) (Lactobacillus fermentum).